The following is an 822-amino-acid chain: MELLSGPHAFLLLLLQVCWLRSVVSEPYRAGFIGEAGVTLEVEGTDLEPSQVLGKVALAGQGMHHADNGDIIMLTRGTVQGGKDAMHSPPTRILRRRKREWVMPPIFVPENGKGPFPQRLNQLKSNKDRGTKIFYSITGPGADSPPEGVFTIEKESGWLLLHMPLDREKIVKYELYGHAVSENGASVEEPMNISIIVTDQNDNKPKFTQDTFRGSVLEGVMPGTSVMQVTATDEDDAVNTYNGVVAYSIHSQEPKEPHDLMFTIHKSTGTISVISSGLDREKVPEYRLTVQATDMDGEGSTTTAEAVVQILDANDNAPEFEPQKYEAWVPENEVGHEVQRLTVTDLDVPNSPAWRATYHIVGGDDGDHFTITTHPETNQGVLTTKKGLDFEAQDQHTLYVEVTNEAPFAVKLPTATATVVVHVKDVNEAPVFVPPSKVIEAQEGISIGELVCIYTAQDPDKEDQKISYTISRDPANWLAVDPDSGQITAAGILDREDEQFVKNNVYEVMVLATDSGNPPTTGTGTLLLTLTDINDHGPIPEPRQIIICNQSPVPQVLNITDKDLSPNSSPFQAQLTHDSDIYWMAEVSEKGDTVALSLKKFLKQDTYDLHLSLSDHGNREQLTMIRATVCDCHGQVFNDCPRPWKGGFILPILGAVLALLTLLLALLLLVRKKRKVKEPLLLPEDDTRDNVFYYGEEGGGEEDQDYDITQLHRGLEARPEVVLRNDVVPTFIPTPMYRPRPANPDEIGNFIIENLKAANTDPTAPPYDSLLVFDYEGSGSDAASLSSLTTSASDQDQDYNYLNEWGSRFKKLADMYGGGEDD.

Positions 1–25 (MELLSGPHAFLLLLLQVCWLRSVVS) are cleaved as a signal peptide. Residues 26-99 (EPYRAGFIGE…PTRILRRRKR (74 aa)) constitute a propeptide that is removed on maturation. Cadherin domains follow at residues 100-207 (EWVM…KPKF), 208-320 (TQDT…APEF), 321-432 (EPQK…APVF), 433-538 (VPPS…DHGP), and 539-645 (IPEP…RPWK). Residues 100-647 (EWVMPPIFVP…NDCPRPWKGG (548 aa)) are Extracellular-facing. N192 carries an N-linked (GlcNAc...) asparagine glycan. N558 carries N-linked (GlcNAc...) asparagine glycosylation. A helical transmembrane segment spans residues 648–670 (FILPILGAVLALLTLLLALLLLV). The Cytoplasmic portion of the chain corresponds to 671-822 (RKKRKVKEPL…ADMYGGGEDD (152 aa)).

Interacts with CDCP1 and CTNNB1.

The protein resides in the cell membrane. In terms of biological role, cadherins are calcium-dependent cell adhesion proteins. They preferentially interact with themselves in a homophilic manner in connecting cells; cadherins may thus contribute to the sorting of heterogeneous cell types. This is Cadherin-3 (Cdh3) from Mus musculus (Mouse).